Here is a 186-residue protein sequence, read N- to C-terminus: Peptidyl-tRNA hydrolase (186 aa).

Tyr-14 serves as a coordination point for tRNA. The active-site Proton acceptor is His-19. TRNA contacts are provided by Tyr-64, Asn-66, and Asn-112.

The protein belongs to the PTH family. As to quaternary structure, monomer.

Its subcellular location is the cytoplasm. The catalysed reaction is an N-acyl-L-alpha-aminoacyl-tRNA + H2O = an N-acyl-L-amino acid + a tRNA + H(+). Functionally, hydrolyzes ribosome-free peptidyl-tRNAs (with 1 or more amino acids incorporated), which drop off the ribosome during protein synthesis, or as a result of ribosome stalling. Its function is as follows. Catalyzes the release of premature peptidyl moieties from peptidyl-tRNA molecules trapped in stalled 50S ribosomal subunits, and thus maintains levels of free tRNAs and 50S ribosomes. The protein is Peptidyl-tRNA hydrolase of Geobacillus kaustophilus (strain HTA426).